The sequence spans 89 residues: Large ribosomal subunit protein bL31B (89 aa).

Belongs to the bacterial ribosomal protein bL31 family. Type B subfamily. In terms of assembly, part of the 50S ribosomal subunit.

In Pseudomonas fluorescens (strain ATCC BAA-477 / NRRL B-23932 / Pf-5), this protein is Large ribosomal subunit protein bL31B.